Reading from the N-terminus, the 477-residue chain is MKVLHVCSELYPLLKTGGLADVLGALPAAQKEIGLDARILIPAYPAISAGIPDTGVVAEFHNSAAGHVVLRYGEFNGVGVYLIDAPNLYAREGNPYHDQWYNDYADNYKRFALLGWVGAELATGLDPWWMAEVVHAHDWHAGLTSAYLAYKGRPAKSVFTIHNLAYQGLFAYHHLFEIGLPTSMFNVNGLEFYGQISYLKAGLYYSDAVTAVSPTYAREITTPEFAYGFEGLLSTLHSQGKLVGILNGVDDNIWNPNTDGYIQDHYKLKSMTGKKKNKAALQAHFNLPEKPDALLFVMITRLTEQKGVDLLIQSAENIIKQGGQLALLGSGAPSLESALLGLAHKHPKNIAVKIGYDEPLSHLMVAGGDVILVPSRFEPCGLTQLYGLKYGTLPLVRQTGGLADTVVDSTAENIKERRATGFVFNEANSQALSHAISRAFSLWKKQRTWFTVRTVAMEQDFSWQISARRYEELYRRI.

Lys15 is a binding site for ADP-alpha-D-glucose.

The protein belongs to the glycosyltransferase 1 family. Bacterial/plant glycogen synthase subfamily.

It carries out the reaction [(1-&gt;4)-alpha-D-glucosyl](n) + ADP-alpha-D-glucose = [(1-&gt;4)-alpha-D-glucosyl](n+1) + ADP + H(+). Its pathway is glycan biosynthesis; glycogen biosynthesis. Synthesizes alpha-1,4-glucan chains using ADP-glucose. The polypeptide is Glycogen synthase (Mannheimia succiniciproducens (strain KCTC 0769BP / MBEL55E)).